A 116-amino-acid chain; its full sequence is Protein BIC2 (116 aa).

Disordered regions lie at residues 1-33 and 95-116; these read MKNT…TCFP and DSGD…ESSC.

The protein localises to the nucleus. Functionally, regulates the blue-light dependent dimerization of CRY2 and formation of photobodies. Inhibits CRY phosphorylation. This Arabidopsis thaliana (Mouse-ear cress) protein is Protein BIC2.